Reading from the N-terminus, the 86-residue chain is MAQKKGGGSTRNGRDSESKRLGVKVYGGQSILAGSIIVRQRGTRFHPGVNVGVGKDHTLFALANGKVHFSVKGALNKPTVSVVAAE.

Residues 1–10 show a composition bias toward gly residues; that stretch reads MAQKKGGGST. The segment at 1–20 is disordered; that stretch reads MAQKKGGGSTRNGRDSESKR.

Belongs to the bacterial ribosomal protein bL27 family.

In Bordetella parapertussis (strain 12822 / ATCC BAA-587 / NCTC 13253), this protein is Large ribosomal subunit protein bL27.